The chain runs to 185 residues: Probable chorismate pyruvate-lyase 1 (185 aa).

The substrate site is built by arginine 70, leucine 108, and glutamate 166.

This sequence belongs to the UbiC family.

The protein localises to the cytoplasm. The catalysed reaction is chorismate = 4-hydroxybenzoate + pyruvate. It functions in the pathway cofactor biosynthesis; ubiquinone biosynthesis. Removes the pyruvyl group from chorismate, with concomitant aromatization of the ring, to provide 4-hydroxybenzoate (4HB) for the ubiquinone pathway. The sequence is that of Probable chorismate pyruvate-lyase 1 from Pseudomonas fluorescens (strain Pf0-1).